The sequence spans 285 residues: Tropomyosin alpha-3 chain (285 aa).

Positions 1–285 (MMEAIKKKMQ…DHALNDMTSI (285 aa)) form a coiled coil. Met2 is modified (N-acetylmethionine). Position 2 is an N-acetylalanine (Met2). Residues 16-41 (KENALDRAEQAEAEQKQAEERSKQLE) show a composition bias toward basic and acidic residues. The segment at 16–44 (KENALDRAEQAEAEQKQAEERSKQLEDEL) is disordered. At Thr54 the chain carries Phosphothreonine. 2 positions are modified to phosphoserine: Ser62 and Ser88. Thr109 carries the post-translational modification Phosphothreonine. N6-acetyllysine is present on residues Glu125 and Leu177. Phosphoserine is present on Ser207. At Tyr215 the chain carries N6-acetyllysine. At Ser216 the chain carries Phosphoserine. Thr253 bears the Phosphothreonine mark. Phosphotyrosine is present on Tyr262. Ser272 bears the Phosphoserine mark. Position 283 is a phosphothreonine (Thr283). Phosphoserine is present on Ser284.

The protein belongs to the tropomyosin family. As to quaternary structure, homodimer. Heterodimer of an alpha (TPM1, TPM3 or TPM4) and a beta (TPM2) chain. Interacts with TMOD1. Interacts with TNNT1.

It is found in the cytoplasm. Its subcellular location is the cytoskeleton. In terms of biological role, binds to actin filaments in muscle and non-muscle cells. Plays a central role, in association with the troponin complex, in the calcium dependent regulation of vertebrate striated muscle contraction. Smooth muscle contraction is regulated by interaction with caldesmon. In non-muscle cells is implicated in stabilizing cytoskeleton actin filaments. This is Tropomyosin alpha-3 chain (TPM3) from Homo sapiens (Human).